The chain runs to 246 residues: 23S rRNA (guanosine-2'-O-)-methyltransferase RlmB (246 aa).

S-adenosyl-L-methionine contacts are provided by glycine 198, isoleucine 218, and leucine 227.

Belongs to the class IV-like SAM-binding methyltransferase superfamily. RNA methyltransferase TrmH family. RlmB subfamily.

The protein resides in the cytoplasm. It carries out the reaction guanosine(2251) in 23S rRNA + S-adenosyl-L-methionine = 2'-O-methylguanosine(2251) in 23S rRNA + S-adenosyl-L-homocysteine + H(+). Functionally, specifically methylates the ribose of guanosine 2251 in 23S rRNA. In Shewanella oneidensis (strain ATCC 700550 / JCM 31522 / CIP 106686 / LMG 19005 / NCIMB 14063 / MR-1), this protein is 23S rRNA (guanosine-2'-O-)-methyltransferase RlmB.